Reading from the N-terminus, the 103-residue chain is Large ribosomal subunit protein uL24 (103 aa).

It belongs to the universal ribosomal protein uL24 family. As to quaternary structure, part of the 50S ribosomal subunit.

Functionally, one of two assembly initiator proteins, it binds directly to the 5'-end of the 23S rRNA, where it nucleates assembly of the 50S subunit. One of the proteins that surrounds the polypeptide exit tunnel on the outside of the subunit. The sequence is that of Large ribosomal subunit protein uL24 from Actinobacillus succinogenes (strain ATCC 55618 / DSM 22257 / CCUG 43843 / 130Z).